The chain runs to 491 residues: Equilibrative nucleobase transporter 1 (491 aa).

The helical transmembrane segment at 17–37 (LLECLGFAGVLFGWPSLVFVF) threads the bilayer. N56 is a glycosylation site (N-linked (GlcNAc...) asparagine). The next 5 membrane-spanning stretches (helical) occupy residues 72-92 (LIFT…GYIF), 102-122 (LIAI…SAGS), 123-143 (AVLL…FLIT), 156-176 (STII…FLII), and 188-208 (ASFI…FLLM). Residues N220 and N229 are each glycosylated (N-linked (GlcNAc...) asparagine). S253 is modified (phosphoserine). T258 carries the phosphothreonine modification. A run of 6 helical transmembrane segments spans residues 279 to 299 (FAWH…FIGT), 319 to 339 (TNAF…GLLM), 356 to 376 (STLA…SLLC), 396 to 418 (ILQV…LAFP), 427 to 447 (GLVM…FTLI), and 456 to 476 (FYVN…PFLV).

It belongs to the SLC43A transporter (TC 2.A.1.44) family. In terms of tissue distribution, widely expressed with highest levels in the liver and lung, followed by the pancreas. Highly expressed in macrophages.

It is found in the basolateral cell membrane. The enzyme catalyses adenine(out) = adenine(in). It carries out the reaction guanine(out) = guanine(in). It catalyses the reaction hypoxanthine(out) = hypoxanthine(in). Adenine transport is strongly inhibited by decynium-22. Its activity is regulated as follows. 6-mercaptopurine-transport is inhibited by 6-thioguanine, 6-methylmercaptopurine and decynium-22. Sodium-independent purine-selective nucleobase transporter which mediates the equilibrative transport of extracellular purine nucleobases such as adenine, guanine and hypoxanthine. May regulate fatty acid (FA) transport in adipocytes, acting as a positive regulator of FA efflux and as a negative regulator of FA uptake. Functionally, sodium-independent purine-selective nucleobase transporter which mediates the equilibrative transport of extracellular purine nucleobase adenine. Mediates the influx and efflux of the purine nucleobase analog drug 6-mercaptopurine across the membrane. In Homo sapiens (Human), this protein is Equilibrative nucleobase transporter 1 (SLC43A3).